The primary structure comprises 1471 residues: Myosin-4 (1471 aa).

The Myosin N-terminal SH3-like domain occupies 4–57 (EVGTKCWYPHKEQGWIGGEVTKNDFFEGTFHLELKLEDGETVSIETNSFENDDD). In terms of domain architecture, Myosin motor spans 71-777 (ESTDDLTTLS…MLAFLEKLRT (707 aa)). ATP is bound at residue 165 to 172 (GESGAGKT). Residues 647–669 (LGELMAIINSTNVHYIRCIKPNS) are actin-binding. IQ domains lie at 781–801 (NEIC…LQYL), 804–824 (MESI…TRVD), 829–849 (TRAA…EYYR), 876–898 (MLMA…DYRT), and 899–928 (LKRS…EVEE). Positions 938–1063 (GLLEEAIEFK…LAFIENVIAQ (126 aa)) form a coiled coil. Positions 1164 to 1419 (SKVLLTVESI…LNYLANVIKR (256 aa)) constitute a Dilute domain.

It belongs to the TRAFAC class myosin-kinesin ATPase superfamily. Myosin family. In terms of assembly, interacts with SHE2 and SHE3.

The protein localises to the bud. Part of the mRNA localization machinery that restricts accumulation of certain proteins to the bud and in the daughter cell. Recruited to specific mRNAs including the ASH1 mRNA, coding for a repressor of the HO endonuclease, via its interaction with SHE3. In Saccharomyces cerevisiae (strain ATCC 204508 / S288c) (Baker's yeast), this protein is Myosin-4 (MYO4).